Reading from the N-terminus, the 834-residue chain is Protein translocase subunit SecA (834 aa).

ATP is bound by residues Q85, 103-107 (GEGKT), and D491. C818, C820, C829, and C830 together coordinate Zn(2+).

The protein belongs to the SecA family. Monomer and homodimer. Part of the essential Sec protein translocation apparatus which comprises SecA, SecYEG and auxiliary proteins SecDF. Other proteins may also be involved. Zn(2+) serves as cofactor.

The protein localises to the cell membrane. The protein resides in the cytoplasm. It catalyses the reaction ATP + H2O + cellular proteinSide 1 = ADP + phosphate + cellular proteinSide 2.. In terms of biological role, part of the Sec protein translocase complex. Interacts with the SecYEG preprotein conducting channel. Has a central role in coupling the hydrolysis of ATP to the transfer of proteins into and across the cell membrane, serving as an ATP-driven molecular motor driving the stepwise translocation of polypeptide chains across the membrane. This is Protein translocase subunit SecA from Clostridium kluyveri (strain ATCC 8527 / DSM 555 / NBRC 12016 / NCIMB 10680 / K1).